A 379-amino-acid polypeptide reads, in one-letter code: Lipid-A-disaccharide synthase (379 aa).

This sequence belongs to the LpxB family.

It catalyses the reaction a lipid X + a UDP-2-N,3-O-bis[(3R)-3-hydroxyacyl]-alpha-D-glucosamine = a lipid A disaccharide + UDP + H(+). It functions in the pathway bacterial outer membrane biogenesis; LPS lipid A biosynthesis. Its function is as follows. Condensation of UDP-2,3-diacylglucosamine and 2,3-diacylglucosamine-1-phosphate to form lipid A disaccharide, a precursor of lipid A, a phosphorylated glycolipid that anchors the lipopolysaccharide to the outer membrane of the cell. This chain is Lipid-A-disaccharide synthase, found in Vibrio parahaemolyticus serotype O3:K6 (strain RIMD 2210633).